The sequence spans 470 residues: ATP synthase subunit beta (470 aa).

Residue 155-162 (GGAGVGKT) participates in ATP binding.

The protein belongs to the ATPase alpha/beta chains family. In terms of assembly, F-type ATPases have 2 components, CF(1) - the catalytic core - and CF(0) - the membrane proton channel. CF(1) has five subunits: alpha(3), beta(3), gamma(1), delta(1), epsilon(1). CF(0) has three main subunits: a(1), b(2) and c(9-12). The alpha and beta chains form an alternating ring which encloses part of the gamma chain. CF(1) is attached to CF(0) by a central stalk formed by the gamma and epsilon chains, while a peripheral stalk is formed by the delta and b chains.

It localises to the cell membrane. The catalysed reaction is ATP + H2O + 4 H(+)(in) = ADP + phosphate + 5 H(+)(out). Functionally, produces ATP from ADP in the presence of a proton gradient across the membrane. The catalytic sites are hosted primarily by the beta subunits. The protein is ATP synthase subunit beta of Staphylococcus epidermidis (strain ATCC 35984 / DSM 28319 / BCRC 17069 / CCUG 31568 / BM 3577 / RP62A).